Reading from the N-terminus, the 121-residue chain is Large ribosomal subunit protein bL20 (121 aa).

The protein belongs to the bacterial ribosomal protein bL20 family.

Functionally, binds directly to 23S ribosomal RNA and is necessary for the in vitro assembly process of the 50S ribosomal subunit. It is not involved in the protein synthesizing functions of that subunit. In Chlamydia felis (strain Fe/C-56) (Chlamydophila felis), this protein is Large ribosomal subunit protein bL20.